We begin with the raw amino-acid sequence, 491 residues long: 3-octaprenyl-4-hydroxybenzoate carboxy-lyase (491 aa).

Residue Asn172 participates in Mn(2+) binding. Residues 175–177 (IYR), 189–191 (RWL), and 194–195 (RG) each bind prenylated FMN. Mn(2+) is bound at residue Glu238. Asp287 acts as the Proton donor in catalysis.

The protein belongs to the UbiD family. As to quaternary structure, homohexamer. Requires prenylated FMN as cofactor. Mn(2+) serves as cofactor.

The protein localises to the cell membrane. It carries out the reaction a 4-hydroxy-3-(all-trans-polyprenyl)benzoate + H(+) = a 2-(all-trans-polyprenyl)phenol + CO2. The protein operates within cofactor biosynthesis; ubiquinone biosynthesis. Its function is as follows. Catalyzes the decarboxylation of 3-octaprenyl-4-hydroxy benzoate to 2-octaprenylphenol, an intermediate step in ubiquinone biosynthesis. This is 3-octaprenyl-4-hydroxybenzoate carboxy-lyase from Klebsiella pneumoniae subsp. pneumoniae (strain ATCC 700721 / MGH 78578).